We begin with the raw amino-acid sequence, 376 residues long: WD repeat-containing protein 86 (376 aa).

WD repeat units follow at residues 13 to 52 (DHRG…CCAL), 55 to 94 (GHES…QVYR), 95 to 132 (GHTS…MSRE), 135 to 188 (GHRN…CHQT), 191 to 232 (GHTG…RVFR), 234 to 272 (HRGS…RTFT), 274 to 310 (HRRN…LRRV), and 313 to 350 (GHTF…GAPR).

The chain is WD repeat-containing protein 86 (WDR86) from Homo sapiens (Human).